The sequence spans 395 residues: Isoafricanol synthase (395 aa).

Mg(2+) is bound by residues Asp-95, Asn-246, Ser-250, and Glu-254. The segment covering 346–357 (TEAVSGGRERPW) has biased composition (basic and acidic residues). The tract at residues 346–395 (TEAVSGGRERPWARLTGAEDLIRAGRGAPPPPGSGPDTRQPMPSEPSQLA) is disordered.

This sequence belongs to the terpene synthase family. It depends on Mg(2+) as a cofactor.

It carries out the reaction (2E,6E)-farnesyl diphosphate + H2O = (+)-isoafricanol + diphosphate. Catalyzes the cyclization of farnesyl diphosphate (FPP) to isoafricanol. The protein is Isoafricanol synthase of Streptomyces malaysiensis.